The primary structure comprises 496 residues: Cobyric acid synthase (496 aa).

A GATase cobBQ-type domain is found at 256–444 (KINIAVVLLR…IHGILDNQAF (189 aa)). Residue Cys-337 is the Nucleophile of the active site. His-436 is a catalytic residue.

This sequence belongs to the CobB/CobQ family. CobQ subfamily.

It participates in cofactor biosynthesis; adenosylcobalamin biosynthesis. Functionally, catalyzes amidations at positions B, D, E, and G on adenosylcobyrinic A,C-diamide. NH(2) groups are provided by glutamine, and one molecule of ATP is hydrogenolyzed for each amidation. The protein is Cobyric acid synthase of Phocaeicola vulgatus (strain ATCC 8482 / DSM 1447 / JCM 5826 / CCUG 4940 / NBRC 14291 / NCTC 11154) (Bacteroides vulgatus).